The sequence spans 900 residues: Translation initiation factor IF-2 (900 aa).

Over residues 80-95 the composition is skewed to basic and acidic residues; that stretch reads LEEQSRKTVEKEDQLR. Disordered regions lie at residues 80-106, 149-169, and 221-268; these read LEEQSRKTVEKEDQLRDTLQPSPVPGR, AVEAEPEVAPPSLEAEEDSPV, and DEFD…VDEK. A compositionally biased stretch (basic residues) spans 253–262; it reads GKKKGKKKKK. Residues 397-567 form the tr-type G domain; it reads TRPPVVTIMG…LTEAEVRELK (171 aa). The G1 stretch occupies residues 406–413; sequence GHVDHGKT. 406-413 is a GTP binding site; it reads GHVDHGKT. The tract at residues 431–435 is G2; that stretch reads GITQH. The segment at 453–456 is G3; the sequence is DTPG. Residues 453 to 457 and 507 to 510 each bind GTP; these read DTPGH and NKID. Positions 507-510 are G4; sequence NKID. Residues 543–545 are G5; that stretch reads SAK.

It belongs to the TRAFAC class translation factor GTPase superfamily. Classic translation factor GTPase family. IF-2 subfamily.

The protein localises to the cytoplasm. In terms of biological role, one of the essential components for the initiation of protein synthesis. Protects formylmethionyl-tRNA from spontaneous hydrolysis and promotes its binding to the 30S ribosomal subunits. Also involved in the hydrolysis of GTP during the formation of the 70S ribosomal complex. The sequence is that of Translation initiation factor IF-2 from Chlorobium phaeovibrioides (strain DSM 265 / 1930) (Prosthecochloris vibrioformis (strain DSM 265)).